Here is a 503-residue protein sequence, read N- to C-terminus: MTAATTAELVDFDDVVARYEPVMGMEVHVELSTATKMFCGCANRFGAEPNTLVCPVCLGLPGALPVLNEAAVESAIRIGLALNCEITPWGRFARKNYFYPDQPKNYQISQYDEPIAVDGYLDVPLEDGTTWRVEIERAHMEEDTGKLTHLGSDTGRIAGATTSLADYNRAGVPLIEIVTKPIEGAGARAPEIARAYVTALRQLMRALDVSDVRMDQGSMRCDSNVSLKPKGAKEFGTRTETKNVNSLRSVEVAVRYEMRRQAAVLDAGGTVTQETRHFHEDGYTSPGRSKETAQDYRYFPEPDLEPVAPSPELVERLRTTIPELPWLARKRIQDDWGVSDEVMRDLVNAGAVELVAATVDHGVSSEAARAWWGNFLVQKANEAGVELDELPISPAQVAAVVKLVDEGKLSNKLARQVVEGVLAGEGEPEQVMTDRGLALVRDDSVIQAAVDEALAANPDIVEKIRGGKVQAAGAIVGAVMKATKGSADAARVRELVLAACGQS.

The protein belongs to the GatB/GatE family. GatB subfamily. As to quaternary structure, heterotrimer of A, B and C subunits.

The enzyme catalyses L-glutamyl-tRNA(Gln) + L-glutamine + ATP + H2O = L-glutaminyl-tRNA(Gln) + L-glutamate + ADP + phosphate + H(+). The catalysed reaction is L-aspartyl-tRNA(Asn) + L-glutamine + ATP + H2O = L-asparaginyl-tRNA(Asn) + L-glutamate + ADP + phosphate + 2 H(+). Allows the formation of correctly charged Asn-tRNA(Asn) or Gln-tRNA(Gln) through the transamidation of misacylated Asp-tRNA(Asn) or Glu-tRNA(Gln) in organisms which lack either or both of asparaginyl-tRNA or glutaminyl-tRNA synthetases. The reaction takes place in the presence of glutamine and ATP through an activated phospho-Asp-tRNA(Asn) or phospho-Glu-tRNA(Gln). This Mycolicibacterium smegmatis (strain ATCC 700084 / mc(2)155) (Mycobacterium smegmatis) protein is Aspartyl/glutamyl-tRNA(Asn/Gln) amidotransferase subunit B.